Consider the following 94-residue polypeptide: Integration host factor subunit beta (94 aa).

The protein belongs to the bacterial histone-like protein family. In terms of assembly, heterodimer of an alpha and a beta chain.

Functionally, this protein is one of the two subunits of integration host factor, a specific DNA-binding protein that functions in genetic recombination as well as in transcriptional and translational control. This Brucella abortus (strain S19) protein is Integration host factor subunit beta.